The following is a 384-amino-acid chain: G protein-coupled receptor 88 (384 aa).

The Extracellular segment spans residues 1 to 35 (MTNSSSTSTSSTTGGSLLLLCEEEESWAGRRIPVS). N-linked (GlcNAc...) asparagine glycosylation occurs at N3. Residues 36–56 (LLYSGLAIGGTLANGMVIYLV) traverse the membrane as a helical segment. Residues 57–73 (SSFRKLQTTSNAFIVNG) lie on the Cytoplasmic side of the membrane. The chain crosses the membrane as a helical span at residues 74–94 (CAADLSVCALWMPQEAVLGLL). At 95–116 (PTGSAEPPADWDGAGGSYRLLR) the chain is on the extracellular side. A helical membrane pass occupies residues 117 to 136 (GGLLGLGLTVSLLSHCLVAL). The Cytoplasmic portion of the chain corresponds to 137–158 (NRYLLITRAPATYQALYQRRHT). A helical membrane pass occupies residues 159 to 179 (AGMLALSWALALGLVLLLPPW). Residues 180–195 (APRPGAAPPRVHYPAL) lie on the Extracellular side of the membrane. A helical membrane pass occupies residues 196–216 (LAAAALLAQTALLLHCYLGIV). The Cytoplasmic segment spans residues 217–285 (RRVRVSVKRV…RAQRRLSGLS (69 aa)). Residues 286 to 306 (VLLLCCVFLLATQPLVWVSLA) form a helical membrane-spanning segment. Residues 307–310 (SGFS) lie on the Extracellular side of the membrane. The helical transmembrane segment at 311–331 (LPVPWGVQAASWLLCCALSAL) threads the bilayer. Over 332-384 (NPLLYTWRNEEFRRSVRSVLPGVGDAAAAAVAATAVPAVSQAQLGTRAAGQHW) the chain is Cytoplasmic.

The protein belongs to the G-protein coupled receptor 1 family. In terms of tissue distribution, expressed predominantly in the striatum.

The protein localises to the cell membrane. The protein resides in the cell projection. It localises to the cilium membrane. It is found in the cytoplasm. Its subcellular location is the nucleus. Orphan G protein-coupled receptor implicated in a large repertoire of behavioral responses that engage motor activities, spatial learning, and emotional processing. May play a role in the regulation of cognitive and motor function. Couples with the heterotrimeric G protein complex of the G(i) subfamily, consisting of GNAI1, GNB1 and GNG2, thereby acting through a G(i)-mediated pathway. Plays a role in the attenuation of D1 dopamine receptor (D1R)-mediated cAMP response in ciliated cells. In non-ciliated cells, involved in the inhibition of the beta-2 adrenergic receptor (B2AR) response. The protein is G protein-coupled receptor 88 (GPR88) of Homo sapiens (Human).